A 478-amino-acid polypeptide reads, in one-letter code: Putative L-amino-acid oxidase YobN (478 aa).

FAD-binding positions include Ser34, Glu53, Arg61, and Met80–Arg81. Substrate contacts are provided by Arg81 and Tyr369. FAD-binding positions include Glu451 and Met460 to Ala463.

The protein belongs to the flavin monoamine oxidase family. FIG1 subfamily. Requires FAD as cofactor.

The enzyme catalyses an L-alpha-amino acid + O2 + H2O = a 2-oxocarboxylate + H2O2 + NH4(+). This Bacillus subtilis (strain 168) protein is Putative L-amino-acid oxidase YobN (yobN).